The chain runs to 514 residues: Peptide chain release factor 3 (514 aa).

The 261-residue stretch at 8 to 268 (KKRRTFAIIS…IFLKFAPEPH (261 aa)) folds into the tr-type G domain. GTP contacts are provided by residues 17–24 (SHPDAGKT), 85–89 (DTPGH), and 139–142 (NKLD).

It belongs to the TRAFAC class translation factor GTPase superfamily. Classic translation factor GTPase family. PrfC subfamily.

Its subcellular location is the cytoplasm. Its function is as follows. Increases the formation of ribosomal termination complexes and stimulates activities of RF-1 and RF-2. It binds guanine nucleotides and has strong preference for UGA stop codons. It may interact directly with the ribosome. The stimulation of RF-1 and RF-2 is significantly reduced by GTP and GDP, but not by GMP. This chain is Peptide chain release factor 3, found in Streptococcus pneumoniae (strain 70585).